The sequence spans 357 residues: DNA replication and repair protein RecF (357 aa).

30-37 contributes to the ATP binding site; sequence GANGSGKT.

It belongs to the RecF family.

The protein resides in the cytoplasm. In terms of biological role, the RecF protein is involved in DNA metabolism; it is required for DNA replication and normal SOS inducibility. RecF binds preferentially to single-stranded, linear DNA. It also seems to bind ATP. This is DNA replication and repair protein RecF from Salmonella arizonae (strain ATCC BAA-731 / CDC346-86 / RSK2980).